The sequence spans 349 residues: Probable dual-specificity RNA methyltransferase RlmN (349 aa).

Glu94 serves as the catalytic Proton acceptor. Residues 100-321 (DEDRATLCVS…TQHGVFATIR (222 aa)) form the Radical SAM core domain. Cys107 and Cys332 are oxidised to a cystine. Cys114, Cys118, and Cys121 together coordinate [4Fe-4S] cluster. S-adenosyl-L-methionine is bound by residues 159-160 (GE), Ser191, 213-215 (SMH), and His289. Cys332 acts as the S-methylcysteine intermediate in catalysis.

The protein belongs to the radical SAM superfamily. RlmN family. It depends on [4Fe-4S] cluster as a cofactor.

Its subcellular location is the cytoplasm. It catalyses the reaction adenosine(2503) in 23S rRNA + 2 reduced [2Fe-2S]-[ferredoxin] + 2 S-adenosyl-L-methionine = 2-methyladenosine(2503) in 23S rRNA + 5'-deoxyadenosine + L-methionine + 2 oxidized [2Fe-2S]-[ferredoxin] + S-adenosyl-L-homocysteine. The catalysed reaction is adenosine(37) in tRNA + 2 reduced [2Fe-2S]-[ferredoxin] + 2 S-adenosyl-L-methionine = 2-methyladenosine(37) in tRNA + 5'-deoxyadenosine + L-methionine + 2 oxidized [2Fe-2S]-[ferredoxin] + S-adenosyl-L-homocysteine. Specifically methylates position 2 of adenine 2503 in 23S rRNA and position 2 of adenine 37 in tRNAs. This is Probable dual-specificity RNA methyltransferase RlmN from Phocaeicola vulgatus (strain ATCC 8482 / DSM 1447 / JCM 5826 / CCUG 4940 / NBRC 14291 / NCTC 11154) (Bacteroides vulgatus).